The chain runs to 111 residues: Ig kappa chain V-III region PC 6684 (111 aa).

The framework-1 stretch occupies residues 1–23; that stretch reads DIVLTQSPASLAVSLGQRATISC. Cysteine 23 and cysteine 92 are joined by a disulfide. Residues 24–38 are complementarity-determining-1; that stretch reads RASKSVSTSGYSYMH. The segment at 39 to 53 is framework-2; it reads WYQQKPGQPPKLLIY. The tract at residues 54-60 is complementarity-determining-2; sequence LASNLES. The tract at residues 61–92 is framework-3; the sequence is GVPARFSGSGSGTDFTLNIHPVEEEDAATYYC. Residues 93–101 form a complementarity-determining-3 region; that stretch reads QHSRELPRT. A framework-4 region spans residues 102–111; it reads FGGGTKLEIK.

The chain is Ig kappa chain V-III region PC 6684 from Mus musculus (Mouse).